The following is a 410-amino-acid chain: Aminopeptidase AmpS (410 aa).

6 residues coordinate a divalent metal cation: Glu-250, Glu-316, Glu-340, His-345, His-378, and Asp-380.

Belongs to the peptidase M29 family. It depends on Co(2+) as a cofactor. The cofactor is Zn(2+). Mg(2+) is required as a cofactor.

In terms of biological role, metal-dependent exopeptidase. In Bacillus subtilis (strain 168), this protein is Aminopeptidase AmpS (ampS).